Consider the following 776-residue polypeptide: Cullin-1 (776 aa).

Arginine 63 carries the post-translational modification Omega-N-methylarginine. Residues 706-766 (DRKLLIQAAI…IEKEYLERVD (61 aa)) enclose the Cullin neddylation domain. A Glycyl lysine isopeptide (Lys-Gly) (interchain with G-Cter in NEDD8) cross-link involves residue lysine 720.

Belongs to the cullin family. Component of multiple Cul1-RING E3 ubiquitin-protein ligase complexes commonly known as SCF (SKP1-CUL1-F-box) complexes, consisting of CUL1, SKP1, RBX1 and a variable F-box domain-containing protein as substrate-specific subunit. Component of the SCF(FBXW11) complex containing FBXW11. Component of the SCF(SKP2) complex containing SKP2, in which it interacts directly with SKP1, SKP2 and RBX1. Component of the SCF(FBXW2) complex containing FBXW2. Component of the SCF(FBXO32) complex containing FBXO32. Component of the probable SCF(FBXO7) complex containing FBXO7. Component of the SCF(FBXO10) complex containing FBXO10. Component of the SCF(FBXO11) complex containing FBXO11. Component of the SCF(FBXO25) complex containing FBXO25. Component of the SCF(FBXO33) complex containing FBXO33. Component of the probable SCF(FBXO4) complex containing FBXO4. Component of the SCF(FBXO44) complex, composed of SKP1, CUL1 and FBXO44. Component of the SCF(BTRC) complex, composed of SKP1, CUL1 and BTRC. This complex binds phosphorylated NFKBIA. Part of a SCF complex consisting of CUL1, RBX1, SKP1 and FBXO2. Component of a SCF(SKP2)-like complex containing CUL1, SKP1, TRIM21 and SKP2. Component of the SCF(FBXO17) complex, composed of SKP1, CUL1 and FBXO17. Component of the SCF(FBXO27) complex, composed of SKP1, CUL1 and FBXO27. Component of the SCF(CCNF) complex consisting of CUL1, RBX1, SKP1 and CCNF. Interacts with CCNF. Component of the SCF(FBXL3) complex composed of CUL1, SKP1, RBX1 and FBXL3. Component of the SCF(FBXL21) complex composed of CUL1, SKP1, RBX1 and FBXL21. Component of the SCF(FBXO9) composed of CUL1, SKP1, RBX1 and FBXO9. Component of the SCF(FBXW7) composed of CUL1, SKP1, RBX1 and FBXW7. Component of the SCF(FBXO31) complex composed of CUL1, SKP1, RBX1 and FBXO31. Interacts with CHEK2; mediates CHEK2 ubiquitination and regulates its function. Part of a complex with TIP120A/CAND1 and RBX1. The unneddylated form interacts with TIP120A/CAND1 and the interaction mediates the exchange of the F-box substrate-specific subunit. Can self-associate. Interacts with FBXW8. Interacts with RNF7. Interacts with TRIM21. Interacts with COPS2. Interacts with UBE2M. Identified in a complex with RBX1 and GLMN. Interacts with CEP68 as part of the SCF(FBXW11) complex; the interaction is probably mediated by FBXW11 and the complex also contains CDK5RAP2 and PCNT. Interacts (when neddylated) with ARIH1; leading to activate the E3 ligase activity of ARIH1. Interacts with COPS9 isoform 2. Interacts with UBXN1. Interacts with KAT7, probably as part of an SCF complex; the interaction mediates KAT7 ubiquitination. Interacts with NOTCH2. Part of a complex that contains DCUN1D5, CUL1 and RBX1; this complex is bridged by CUL1. Interacts (unneddylated form) with DCUN1D1, DCUN1D2, DCUN1D3, DCUN1D4 and DCUN1D5; these interactions promote the cullin neddylation. Interacts (via the C-terminal domain) with CUL7; the interaction seems to be mediated by FBXW8; it is likely specific to FBXW8, but not other F-box proteins. Interacts with UBR2, as part of SCF(BTRC) complex; the interaction mediates 'Lys-48'-linked ubiquitination of UBR2 and is regulated by DUSP22 in the T-cell receptor signaling pathway. As to quaternary structure, (Microbial infection) Interacts with Epstein-Barr virus BPLF1. In terms of assembly, (Microbial infection) Interacts with Human adenovirus early E1A protein; this interaction inhibits RBX1-CUL1-dependent elongation reaction of ubiquitin chains by the SCF(FBXW7) complex. (Microbial infection) Interacts with vaccinia virus protein C9L. As to quaternary structure, (Microbial infection) Interacts with Epstein-Barr virus (EBV) tegument protein BGLF2; this interaction might facilitate CUL1 recruitment to STAT2, leading to ubiquitination and degradation of the latter. In terms of processing, neddylated; which enhances the ubiquitination activity of SCF. Neddylation prevents binding of the inhibitor CAND1. Neddylation leads to structural rearrangment in the complex that allows interaction between the E2 ubiquitin-conjugating enzyme and the acceptor ubiquitin. Deneddylated via its interaction with the COP9 signalosome (CSN) complex. (Microbial infection) Deneddylated by Epstein-Barr virus BPLF1 leading to a S-phase-like environment that is required for efficient replication of the viral genome. As to expression, expressed in lung fibroblasts.

It participates in protein modification; protein ubiquitination. Its function is as follows. Core component of multiple cullin-RING-based SCF (SKP1-CUL1-F-box protein) E3 ubiquitin-protein ligase complexes, which mediate the ubiquitination of proteins involved in cell cycle progression, signal transduction and transcription. SCF complexes and ARIH1 collaborate in tandem to mediate ubiquitination of target proteins. In the SCF complex, serves as a rigid scaffold that organizes the SKP1-F-box protein and RBX1 subunits. May contribute to catalysis through positioning of the substrate and the ubiquitin-conjugating enzyme. The E3 ubiquitin-protein ligase activity of the complex is dependent on the neddylation of the cullin subunit and exchange of the substrate recognition component is mediated by TIP120A/CAND1. The functional specificity of the SCF complex depends on the F-box protein as substrate recognition component. SCF(BTRC) and SCF(FBXW11) direct ubiquitination of CTNNB1 and participate in Wnt signaling. SCF(FBXW11) directs ubiquitination of phosphorylated NFKBIA. SCF(BTRC) directs ubiquitination of NFKBIB, NFKBIE, ATF4, SMAD3, SMAD4, CDC25A, FBXO5 and probably NFKB2. SCF(BTRC) and/or SCF(FBXW11) direct ubiquitination of CEP68. SCF(SKP2) directs ubiquitination of phosphorylated CDKN1B/p27kip and is involved in regulation of G1/S transition. SCF(SKP2) directs ubiquitination of ORC1, CDT1, RBL2, ELF4, CDKN1A, RAG2, FOXO1A, and probably MYC and TAL1. SCF(FBXW7) directs ubiquitination of CCNE1, NOTCH1 released notch intracellular domain (NICD), and probably PSEN1. SCF(FBXW2) directs ubiquitination of GCM1. SCF(FBXO32) directs ubiquitination of MYOD1. SCF(FBXO7) directs ubiquitination of BIRC2 and DLGAP5. SCF(FBXO33) directs ubiquitination of YBX1. SCF(FBXO1) directs ubiquitination of BCL6 and DTL but does not seem to direct ubiquitination of TP53. SCF(BTRC) mediates the ubiquitination of NFKBIA at 'Lys-21' and 'Lys-22'; the degradation frees the associated NFKB1-RELA dimer to translocate into the nucleus and to activate transcription. SCF(CCNF) directs ubiquitination of CCP110. SCF(FBXL3) and SCF(FBXL21) direct ubiquitination of CRY1 and CRY2. SCF(FBXO9) directs ubiquitination of TTI1 and TELO2. SCF(FBXO10) directs ubiquitination of BCL2. Neddylated CUL1-RBX1 ubiquitinates p53/TP53 recruited by Cul7-RING(FBXW8) complex. SCF(BTRC) directs 'Lys-48'-linked ubiquitination of UBR2 in the T-cell receptor signaling pathway. The SCF(FBXO31) protein ligase complex specifically mediates the ubiquitination of proteins amidated at their C-terminus in response to oxidative stress. This chain is Cullin-1 (CUL1), found in Homo sapiens (Human).